Here is a 62-residue protein sequence, read N- to C-terminus: DNA-directed RNA polymerase subunit Rpo10 (62 aa).

Positions 6, 9, 43, and 44 each coordinate Zn(2+).

It belongs to the archaeal Rpo10/eukaryotic RPB10 RNA polymerase subunit family. As to quaternary structure, part of the RNA polymerase complex. The cofactor is Zn(2+).

It is found in the cytoplasm. It carries out the reaction RNA(n) + a ribonucleoside 5'-triphosphate = RNA(n+1) + diphosphate. Its function is as follows. DNA-dependent RNA polymerase (RNAP) catalyzes the transcription of DNA into RNA using the four ribonucleoside triphosphates as substrates. This is DNA-directed RNA polymerase subunit Rpo10 from Methanococcoides burtonii (strain DSM 6242 / NBRC 107633 / OCM 468 / ACE-M).